We begin with the raw amino-acid sequence, 369 residues long: Anhydro-N-acetylmuramic acid kinase (369 aa).

12–19 (GTSMDGVD) serves as a coordination point for ATP.

This sequence belongs to the anhydro-N-acetylmuramic acid kinase family.

It carries out the reaction 1,6-anhydro-N-acetyl-beta-muramate + ATP + H2O = N-acetyl-D-muramate 6-phosphate + ADP + H(+). It functions in the pathway amino-sugar metabolism; 1,6-anhydro-N-acetylmuramate degradation. Its pathway is cell wall biogenesis; peptidoglycan recycling. Functionally, catalyzes the specific phosphorylation of 1,6-anhydro-N-acetylmuramic acid (anhMurNAc) with the simultaneous cleavage of the 1,6-anhydro ring, generating MurNAc-6-P. Is required for the utilization of anhMurNAc either imported from the medium or derived from its own cell wall murein, and thus plays a role in cell wall recycling. This chain is Anhydro-N-acetylmuramic acid kinase, found in Shewanella amazonensis (strain ATCC BAA-1098 / SB2B).